A 209-amino-acid polypeptide reads, in one-letter code: Uridine kinase (209 aa).

12 to 19 (GGSGSGKT) provides a ligand contact to ATP.

It belongs to the uridine kinase family.

It is found in the cytoplasm. The catalysed reaction is uridine + ATP = UMP + ADP + H(+). The enzyme catalyses cytidine + ATP = CMP + ADP + H(+). Its pathway is pyrimidine metabolism; CTP biosynthesis via salvage pathway; CTP from cytidine: step 1/3. The protein operates within pyrimidine metabolism; UMP biosynthesis via salvage pathway; UMP from uridine: step 1/1. The chain is Uridine kinase from Listeria monocytogenes serotype 4b (strain CLIP80459).